A 421-amino-acid polypeptide reads, in one-letter code: Forkhead box protein J1 (421 aa).

Disordered stretches follow at residues 1-32 and 77-110; these read MAESWLRLCGAGPGEEAGPEGGMEEPDALDDS and ADPACLGQPHTPGKPTSSCTSRSAPPGLQAPPPD. Residues 11-21 are compositionally biased toward gly residues; the sequence is AGPGEEAGPEG. Polar residues predominate over residues 90 to 99; that stretch reads KPTSSCTSRS. Positions 120 to 210 form a DNA-binding region, fork-head; it reads VKPPYSYATL…YAERLLSGAF (91 aa).

Belongs to the FOXJ1 family. In terms of tissue distribution, predominantly expressed in tissues containing motile cilia.

It is found in the nucleus. In terms of biological role, transcription factor specifically required for the formation of motile cilia. Acts by activating transcription of genes that mediate assembly of motile cilia, such as CFAP157. Binds the DNA consensus sequences 5'-HWDTGTTTGTTTA-3' or 5'-KTTTGTTGTTKTW-3' (where H is not G, W is A or T, D is not C, and K is G or T). Activates the transcription of a variety of ciliary proteins in the developing brain and lung. The sequence is that of Forkhead box protein J1 from Mus musculus (Mouse).